Here is a 163-residue protein sequence, read N- to C-terminus: NADH-quinone oxidoreductase subunit I (163 aa).

2 consecutive 4Fe-4S ferredoxin-type domains span residues 54-84 (LRRY…IDSA) and 94-123 (TRYD…ETHI). [4Fe-4S] cluster is bound by residues Cys64, Cys67, Cys70, Cys74, Cys103, Cys106, Cys109, and Cys113.

The protein belongs to the complex I 23 kDa subunit family. NDH-1 is composed of 14 different subunits. Subunits NuoA, H, J, K, L, M, N constitute the membrane sector of the complex. It depends on [4Fe-4S] cluster as a cofactor.

The protein resides in the cell inner membrane. It carries out the reaction a quinone + NADH + 5 H(+)(in) = a quinol + NAD(+) + 4 H(+)(out). Its function is as follows. NDH-1 shuttles electrons from NADH, via FMN and iron-sulfur (Fe-S) centers, to quinones in the respiratory chain. The immediate electron acceptor for the enzyme in this species is believed to be ubiquinone. Couples the redox reaction to proton translocation (for every two electrons transferred, four hydrogen ions are translocated across the cytoplasmic membrane), and thus conserves the redox energy in a proton gradient. The protein is NADH-quinone oxidoreductase subunit I of Xanthomonas oryzae pv. oryzae (strain KACC10331 / KXO85).